The following is a 428-amino-acid chain: Adenylosuccinate synthetase (428 aa).

GTP-binding positions include 11–17 (GDEGKGK) and 39–41 (GHT). The active-site Proton acceptor is Asp12. The Mg(2+) site is built by Asp12 and Gly39. Residues 12–15 (DEGK), 37–40 (NAGH), Thr130, Arg144, Asn226, Thr241, and Arg305 contribute to the IMP site. His40 (proton donor) is an active-site residue. 301-307 (VTTGRKR) is a substrate binding site. Residues Arg307, 333–335 (KLD), and 415–417 (GTG) each bind GTP.

Belongs to the adenylosuccinate synthetase family. As to quaternary structure, homodimer. It depends on Mg(2+) as a cofactor.

It localises to the cytoplasm. The enzyme catalyses IMP + L-aspartate + GTP = N(6)-(1,2-dicarboxyethyl)-AMP + GDP + phosphate + 2 H(+). The protein operates within purine metabolism; AMP biosynthesis via de novo pathway; AMP from IMP: step 1/2. In terms of biological role, plays an important role in the de novo pathway and in the salvage pathway of purine nucleotide biosynthesis. Catalyzes the first committed step in the biosynthesis of AMP from IMP. The sequence is that of Adenylosuccinate synthetase from Candida albicans (strain SC5314 / ATCC MYA-2876) (Yeast).